The chain runs to 331 residues: 2-isopropylmalate synthase (331 aa).

The 80-residue stretch at 1–80 folds into the Pyruvate carboxyltransferase domain; that stretch reads RDEVVRGRDV…YTRINTREIY (80 aa). 3 residues coordinate Mn(2+): His15, His17, and Asn51. Residues 205-331 are regulatory domain; sequence QLEHVQFFSG…PSIEEVHRGV (127 aa).

Belongs to the alpha-IPM synthase/homocitrate synthase family. LeuA type 1 subfamily. In terms of assembly, homotetramer. The cofactor is Mn(2+).

Its subcellular location is the cytoplasm. It carries out the reaction 3-methyl-2-oxobutanoate + acetyl-CoA + H2O = (2S)-2-isopropylmalate + CoA + H(+). It participates in amino-acid biosynthesis; L-leucine biosynthesis; L-leucine from 3-methyl-2-oxobutanoate: step 1/4. In terms of biological role, catalyzes the condensation of the acetyl group of acetyl-CoA with 3-methyl-2-oxobutanoate (2-oxoisovalerate) to form 3-carboxy-3-hydroxy-4-methylpentanoate (2-isopropylmalate). In Thermus thermophilus, this protein is 2-isopropylmalate synthase.